The sequence spans 509 residues: Scavenger receptor class B member 1 (509 aa).

The Cytoplasmic segment spans residues 1–11 (MGGSARARWVA). The chain crosses the membrane as a helical span at residues 12–32 (VGLGVVGLLCAVLGVVMILVM). Residues 33-440 (PSLIKQQVLK…YTQLVLMPQV (408 aa)) lie on the Extracellular side of the membrane. N102, N108, N173, N212, N227, N255, N310, N330, and N383 each carry an N-linked (GlcNAc...) asparagine glycan. C251 and C384 are oxidised to a cystine. Residues 441–461 (LQYVQYVLLGLGGLLLLVPVI) traverse the membrane as a helical segment. The Cytoplasmic portion of the chain corresponds to 462–509 (YQLRSQEKCFLFWSGSKKGSQDKEAIQAYSESLMSPAAKGTVLQEAKL).

Belongs to the CD36 family. In terms of processing, N-glycosylated. The six cysteines of the extracellular domain are all involved in intramolecular disulfide bonds.

Its subcellular location is the cell membrane. The protein resides in the membrane. It localises to the caveola. In terms of biological role, receptor for different ligands such as phospholipids, cholesterol ester, lipoproteins, phosphatidylserine and apoptotic cells. Receptor for HDL, mediating selective uptake of cholesteryl ether and HDL-dependent cholesterol efflux. Also facilitates the flux of free and esterified cholesterol between the cell surface and apoB-containing lipoproteins and modified lipoproteins, although less efficiently than HDL. May be involved in the phagocytosis of apoptotic cells, via its phosphatidylserine binding activity. The protein is Scavenger receptor class B member 1 (SCARB1) of Cricetulus griseus (Chinese hamster).